A 164-amino-acid polypeptide reads, in one-letter code: UPF0114 protein KPK_0696 (164 aa).

The next 4 helical transmembrane spans lie at 15–35 (LLAP…IKFF), 53–73 (LILT…LVMV), 109–126 (VAAS…RVFM), and 136–156 (LMWY…MGYL).

This sequence belongs to the UPF0114 family.

It is found in the cell membrane. In Klebsiella pneumoniae (strain 342), this protein is UPF0114 protein KPK_0696.